Reading from the N-terminus, the 127-residue chain is Large ribosomal subunit protein bL20 (127 aa).

The protein belongs to the bacterial ribosomal protein bL20 family.

Functionally, binds directly to 23S ribosomal RNA and is necessary for the in vitro assembly process of the 50S ribosomal subunit. It is not involved in the protein synthesizing functions of that subunit. The protein is Large ribosomal subunit protein bL20 of Bifidobacterium longum (strain DJO10A).